A 164-amino-acid polypeptide reads, in one-letter code: Histone H1 (164 aa).

The span at 1 to 10 (MAPRSSTSKS) shows a compositional bias: polar residues. The tract at residues 1-164 (MAPRSSTSKS…KKSSKPAKKN (164 aa)) is disordered. Over residues 16–27 (KDHKKAPIKKAI) the composition is skewed to basic residues. Phosphothreonine is present on residues threonine 47 and threonine 54. Basic and acidic residues-rich tracts occupy residues 49 to 61 (VKKD…ADTK), 69 to 89 (TMKE…GDKK), and 117 to 156 (TKKE…DAKK).

Post-translationally, cell-growth/division-associated phosphorylation by a CDC2-like kinase.

The protein resides in the nucleus. Its subcellular location is the chromosome. In terms of biological role, histones H1 are necessary for the condensation of nucleosome chains into higher-order structures. The chain is Histone H1 (HHO) from Tetrahymena thermophila (strain SB210).